Consider the following 99-residue polypeptide: Small ribosomal subunit protein uS14m (99 aa).

This sequence belongs to the universal ribosomal protein uS14 family.

It localises to the mitochondrion. The protein is Small ribosomal subunit protein uS14m (RPS14) of Oenothera berteroana (Bertero's evening primrose).